We begin with the raw amino-acid sequence, 475 residues long: ATP synthase subunit beta, chloroplastic (475 aa).

155-162 (GGAGVGKT) contacts ATP.

This sequence belongs to the ATPase alpha/beta chains family. In terms of assembly, F-type ATPases have 2 components, CF(1) - the catalytic core - and CF(0) - the membrane proton channel. CF(1) has five subunits: alpha(3), beta(3), gamma(1), delta(1), epsilon(1). CF(0) has four main subunits: a(1), b(1), b'(1) and c(9-12).

Its subcellular location is the plastid. It is found in the chloroplast thylakoid membrane. The enzyme catalyses ATP + H2O + 4 H(+)(in) = ADP + phosphate + 5 H(+)(out). Produces ATP from ADP in the presence of a proton gradient across the membrane. The catalytic sites are hosted primarily by the beta subunits. This Ochrosphaera neapolitana protein is ATP synthase subunit beta, chloroplastic.